A 411-amino-acid chain; its full sequence is Metacaspase-1B (411 aa).

A disordered region spans residues 1 to 97; that stretch reads MYHRHSAPPP…PPLEAQQFGN (97 aa). Positions 7-65 are enriched in pro residues; sequence APPPPGRSRGYPPPQQQWPPQPYQYLPYPPQGPPPAHTFPPPAHRSYPSPYPTPPPHSP. Active-site residues include histidine 198 and cysteine 254.

Belongs to the peptidase C14B family.

Its function is as follows. Involved in cell death (apoptosis). This Neosartorya fischeri (strain ATCC 1020 / DSM 3700 / CBS 544.65 / FGSC A1164 / JCM 1740 / NRRL 181 / WB 181) (Aspergillus fischerianus) protein is Metacaspase-1B (casB).